The chain runs to 261 residues: Ribosomal RNA small subunit methyltransferase A (261 aa).

S-adenosyl-L-methionine-binding residues include N15, I17, G42, E64, D90, and N109.

Belongs to the class I-like SAM-binding methyltransferase superfamily. rRNA adenine N(6)-methyltransferase family. RsmA subfamily.

Its subcellular location is the cytoplasm. The enzyme catalyses adenosine(1518)/adenosine(1519) in 16S rRNA + 4 S-adenosyl-L-methionine = N(6)-dimethyladenosine(1518)/N(6)-dimethyladenosine(1519) in 16S rRNA + 4 S-adenosyl-L-homocysteine + 4 H(+). Its function is as follows. Specifically dimethylates two adjacent adenosines (A1518 and A1519) in the loop of a conserved hairpin near the 3'-end of 16S rRNA in the 30S particle. May play a critical role in biogenesis of 30S subunits. This is Ribosomal RNA small subunit methyltransferase A from Wolbachia sp. subsp. Brugia malayi (strain TRS).